A 428-amino-acid chain; its full sequence is Adenylosuccinate synthetase (428 aa).

GTP is bound by residues 12–18 (GDEGKGK) and 40–42 (GHT). Residue D13 is the Proton acceptor of the active site. Residues D13 and G40 each contribute to the Mg(2+) site. Residues 13-16 (DEGK), 38-41 (NAGH), T128, R142, Q223, T238, and R302 each bind IMP. The active-site Proton donor is H41. 298-304 (TTTGRPR) lines the substrate pocket. GTP contacts are provided by residues R304, 330 to 332 (SID), and 412 to 414 (SVG).

It belongs to the adenylosuccinate synthetase family. As to quaternary structure, homodimer. Requires Mg(2+) as cofactor.

The protein resides in the cytoplasm. The catalysed reaction is IMP + L-aspartate + GTP = N(6)-(1,2-dicarboxyethyl)-AMP + GDP + phosphate + 2 H(+). Its pathway is purine metabolism; AMP biosynthesis via de novo pathway; AMP from IMP: step 1/2. Its function is as follows. Plays an important role in the de novo pathway of purine nucleotide biosynthesis. Catalyzes the first committed step in the biosynthesis of AMP from IMP. The sequence is that of Adenylosuccinate synthetase from Geobacillus kaustophilus (strain HTA426).